The chain runs to 299 residues: Bifunctional protein FolD (299 aa).

Residues 179-181 (GPG) and I245 contribute to the NADP(+) site.

This sequence belongs to the tetrahydrofolate dehydrogenase/cyclohydrolase family. As to quaternary structure, homodimer.

It catalyses the reaction (6R)-5,10-methylene-5,6,7,8-tetrahydrofolate + NADP(+) = (6R)-5,10-methenyltetrahydrofolate + NADPH. The catalysed reaction is (6R)-5,10-methenyltetrahydrofolate + H2O = (6R)-10-formyltetrahydrofolate + H(+). The protein operates within one-carbon metabolism; tetrahydrofolate interconversion. In terms of biological role, catalyzes the oxidation of 5,10-methylenetetrahydrofolate to 5,10-methenyltetrahydrofolate and then the hydrolysis of 5,10-methenyltetrahydrofolate to 10-formyltetrahydrofolate. This is Bifunctional protein FolD from Deinococcus radiodurans (strain ATCC 13939 / DSM 20539 / JCM 16871 / CCUG 27074 / LMG 4051 / NBRC 15346 / NCIMB 9279 / VKM B-1422 / R1).